A 273-amino-acid chain; its full sequence is Diaminopimelate epimerase (273 aa).

Substrate-binding residues include N11 and N60. C69 acts as the Proton donor in catalysis. Residues 70–71, N181, and 199–200 each bind substrate; these read GN and ER. Catalysis depends on C209, which acts as the Proton acceptor. Residue 210–211 participates in substrate binding; the sequence is GT.

The protein belongs to the diaminopimelate epimerase family. Homodimer.

The protein localises to the cytoplasm. The enzyme catalyses (2S,6S)-2,6-diaminopimelate = meso-2,6-diaminopimelate. The protein operates within amino-acid biosynthesis; L-lysine biosynthesis via DAP pathway; DL-2,6-diaminopimelate from LL-2,6-diaminopimelate: step 1/1. Functionally, catalyzes the stereoinversion of LL-2,6-diaminopimelate (L,L-DAP) to meso-diaminopimelate (meso-DAP), a precursor of L-lysine and an essential component of the bacterial peptidoglycan. This Helicobacter pylori (strain HPAG1) protein is Diaminopimelate epimerase.